We begin with the raw amino-acid sequence, 554 residues long: Terpene synthase 17 (554 aa).

Aspartate 306, aspartate 310, and glutamate 458 together coordinate Mg(2+). A DDXXD motif motif is present at residues 306 to 310 (DDTYD).

The protein belongs to the terpene synthase family. Tpsa subfamily. It depends on Mg(2+) as a cofactor. Requires Mn(2+) as cofactor.

The catalysed reaction is (2E,6E)-farnesyl diphosphate = (+)-valencene + diphosphate. It carries out the reaction (2E,6E)-farnesyl diphosphate = (E)-beta-farnesene + diphosphate. The enzyme catalyses (2E,6E)-farnesyl diphosphate = gamma-gurjunene + diphosphate. It catalyses the reaction (2Z,6Z)-farnesyl diphosphate = beta-bisabolene + diphosphate. The catalysed reaction is (2Z,6Z)-farnesyl diphosphate = (E)-gamma-bisabolene + diphosphate. It carries out the reaction (2E)-geranyl diphosphate = limonene + diphosphate. The enzyme catalyses (2E)-geranyl diphosphate = beta-myrcene + diphosphate. It catalyses the reaction (2E)-geranyl diphosphate = (E)-beta-ocimene + diphosphate. The catalysed reaction is (2E)-geranyl diphosphate = terpinolene + diphosphate. It carries out the reaction (2E)-geranyl diphosphate = gamma-terpinene + diphosphate. The enzyme catalyses (2Z,6Z)-farnesyl diphosphate = (Z)-gamma-bisabolene + diphosphate. It catalyses the reaction (2E,6E)-farnesyl diphosphate = (1S,5S,6R)-alpha-bergamotene + diphosphate. The catalysed reaction is (2Z,6Z)-farnesyl diphosphate = (1S,5S,6S)-alpha-bergamotene + diphosphate. Its pathway is secondary metabolite biosynthesis; terpenoid biosynthesis. In terms of biological role, sesquiterpene synthase involved in the biosynthesis of volatile compounds. Mediates the conversion of (2E,6E)-farnesyl diphosphate (FPP) into gamma-gurjunene, (E)-beta-farnesene and (+)-valencene, and of (2Z,6Z)-farnesyl diphosphate ((ZZ)-FPP) into (E)-alpha-bergamotene and (Z)-gamma-bisabolene as well as beta-bisabolene, (Z)-alpha-bergamotene and (E)-gamma-bisabolene to a lower extent. Can act with a low efficiency as a monoterpene synthase with geranyl diphosphate (GPP) as substrate, thus producing beta-myrcene, (E)-beta-ocimene, limonene, terpinolene, gamma-terpinene and (Z)-beta-ocimene. This chain is Terpene synthase 17, found in Solanum habrochaites (Wild tomato).